A 270-amino-acid chain; its full sequence is Esterase (270 aa).

Active-site charge relay system residues include Ser127, Asp216, and His244.

Belongs to the LovG family.

It functions in the pathway mycotoxin biosynthesis. Its function is as follows. Esterase; part of the gene cluster that mediates the biosynthesis of the selective antifungal agent ascochitine, an o-quinone methide that plays a possible protective role against other microbial competitors in nature and is considered to be important for pathogenicity of legume-associated Didymella species. The pathway probably begins with the synthesis of a keto-aldehyde intermediate by the ascochitine non-reducing polyketide synthase pksAC from successive condensations of 4 malonyl-CoA units, presumably with a simple acetyl-CoA starter unit. Release of the keto-aldehyde intermediate is consistent with the presence of the C-terminal reductive release domain. The HR-PKS (orf7) probably makes a diketide starter unit which is passed to the non-reducing polyketide synthase pksAC for further extension, producing ascochital and ascochitine. The aldehyde dehydrogenase (orf1), the 2-oxoglutarate-dependent dioxygenase (orf3) and the dehydrogenase (orf9) are probably involved in subsequent oxidations of methyl groups to the carboxylic acid of the heterocyclic ring. The ascochitine gene cluster also includes a gene encoding a short peptide with a cupin domain (orf2) that is often found in secondary metabolite gene clusters and which function has still to be determined. The protein is Esterase of Didymella fabae (Leaf and pod spot disease fungus).